The sequence spans 217 residues: N-(5'-phosphoribosyl)anthranilate isomerase (217 aa).

This sequence belongs to the TrpF family.

The enzyme catalyses N-(5-phospho-beta-D-ribosyl)anthranilate = 1-(2-carboxyphenylamino)-1-deoxy-D-ribulose 5-phosphate. The protein operates within amino-acid biosynthesis; L-tryptophan biosynthesis; L-tryptophan from chorismate: step 3/5. The chain is N-(5'-phosphoribosyl)anthranilate isomerase from Synechococcus elongatus (strain ATCC 33912 / PCC 7942 / FACHB-805) (Anacystis nidulans R2).